Reading from the N-terminus, the 718-residue chain is Heme peroxidase 2 (718 aa).

The signal sequence occupies residues 1–19; sequence MNLKPTILLFTILFLKCAT. Residues 20–146 constitute a propeptide that is removed on maturation; the sequence is FEVNEETERI…QANRRCSSPP (127 aa). Disordered stretches follow at residues 41–64 and 108–144; these read RASE…ANSD and LLQS…RCSS. The segment covering 45–64 has biased composition (polar residues); it reads NSESEQTSQHIIVSQQANSD. Residues 109 to 118 show a composition bias toward low complexity; sequence LQSSETTTTT. Positions 126-139 are enriched in basic residues; the sequence is SKRSAIFRSKRQAN. C149 and C164 are oxidised to a cystine. Catalysis depends on H241, which acts as the Proton acceptor. Ca(2+) is bound at residue D242. C262 and C272 are disulfide-bonded. Ca(2+) is bound by residues S311, F313, D315, and S317. N354 carries an N-linked (GlcNAc...) asparagine glycan. Cysteines 358 and 366 form a disulfide. H477 is a binding site for heme b. 4 N-linked (GlcNAc...) asparagine glycosylation sites follow: N551, N592, N662, and N673. C682 and C705 form a disulfide bridge.

Belongs to the peroxidase family. It depends on heme b as a cofactor. In terms of tissue distribution, expressed in the hypodermis and gland cells of the pharynx. Specifically, there is low and transient expression from the distal bulb of the pharynx to the anterior of the buccal cavity. Whole body expression levels increase upon entry into the dauer phase.

Its subcellular location is the secreted. The enzyme catalyses 2 a phenolic donor + H2O2 = 2 a phenolic radical donor + 2 H2O. Peroxidase which is involved in maintaining the cuticle integrity in the hypodermis and pharynx. It thus plays a role in conferring resistance against Gram-positive bacteria such as E.faecalis, S.aureus and C.diphtheriae, and yeast such as C.albicans. The sequence is that of Heme peroxidase 2 from Caenorhabditis elegans.